Reading from the N-terminus, the 473-residue chain is ATP synthase subunit beta (473 aa).

158-165 (GGAGVGKT) lines the ATP pocket.

The protein belongs to the ATPase alpha/beta chains family. As to quaternary structure, F-type ATPases have 2 components, CF(1) - the catalytic core - and CF(0) - the membrane proton channel. CF(1) has five subunits: alpha(3), beta(3), gamma(1), delta(1), epsilon(1). CF(0) has three main subunits: a(1), b(2) and c(9-12). The alpha and beta chains form an alternating ring which encloses part of the gamma chain. CF(1) is attached to CF(0) by a central stalk formed by the gamma and epsilon chains, while a peripheral stalk is formed by the delta and b chains.

Its subcellular location is the cell membrane. It catalyses the reaction ATP + H2O + 4 H(+)(in) = ADP + phosphate + 5 H(+)(out). Produces ATP from ADP in the presence of a proton gradient across the membrane. The catalytic sites are hosted primarily by the beta subunits. In Geobacillus stearothermophilus (Bacillus stearothermophilus), this protein is ATP synthase subunit beta.